The chain runs to 562 residues: Arf-GAP domain and FG repeat-containing protein 1 (562 aa).

The 125-residue stretch at 11–135 (EKHLKMLRDM…WYVPPEQAKV (125 aa)) folds into the Arf-GAP domain. The C4-type zinc finger occupies 29–52 (CFDCDQRGPTYVNMTVGSFVCTSC). Residues 145 to 193 (GSSASSTSSTPEVKPLKSLLGDSAPTLHLNKGTPSQSPVVGRSQGQQQE) are disordered. Ser-167 is modified (phosphoserine). Residues 176–191 (GTPSQSPVVGRSQGQQ) are compositionally biased toward polar residues. Thr-177 is modified (phosphothreonine). Phosphoserine occurs at positions 181 and 362. The O-linked (GlcNAc) serine glycan is linked to Ser-367.

In terms of assembly, interacts with EPS15R and EPS15. Interacts with FCHO1. Post-translationally, O-glycosylated. In terms of tissue distribution, ubiquitously expressed.

It localises to the nucleus. The protein resides in the cytoplasmic vesicle. Functionally, required for vesicle docking or fusion during acrosome biogenesis. May play a role in RNA trafficking or localization. In case of infection by HIV-1, acts as a cofactor for viral Rev and promotes movement of Rev-responsive element-containing RNAs from the nuclear periphery to the cytoplasm. This step is essential for HIV-1 replication. The polypeptide is Arf-GAP domain and FG repeat-containing protein 1 (AGFG1) (Homo sapiens (Human)).